The sequence spans 523 residues: Protein disulfide-isomerase (523 aa).

The first 22 residues, 1 to 22, serve as a signal peptide directing secretion; it reads MPGVRSLLLALAGVSLAPAVLA. Positions 24-137 constitute a Thioredoxin 1 domain; it reads DASTDSSDVH…TSYMIKQSLP (114 aa). Catalysis depends on nucleophile residues C59 and C62. A disulfide bridge connects residues C59 and C62. N-linked (GlcNAc...) asparagine glycosylation occurs at N170. Residues 344–475 form the Thioredoxin 2 domain; it reads VIAGDIAPSV…LANFVRDNGK (132 aa). C394 and C397 are joined by a disulfide. 2 stretches are compositionally biased toward basic and acidic residues: residues 478–502 and 512–523; these read VDAY…DAEA and SEEKADKEHEEL. Positions 478-523 are disordered; sequence VDAYDEKKVEKDGSDVTGKPKDAEAPPKPSDAPESEEKADKEHEEL. The Prevents secretion from ER signature appears at 520-523; that stretch reads HEEL.

The protein belongs to the protein disulfide isomerase family.

It is found in the endoplasmic reticulum lumen. The catalysed reaction is Catalyzes the rearrangement of -S-S- bonds in proteins.. In terms of biological role, participates in the folding of proteins containing disulfide bonds, may be involved in glycosylation, prolyl hydroxylation and triglyceride transfer. In Arthroderma benhamiae (strain ATCC MYA-4681 / CBS 112371) (Trichophyton mentagrophytes), this protein is Protein disulfide-isomerase.